Reading from the N-terminus, the 1299-residue chain is DNA-directed RNA polymerase subunit beta' (1299 aa).

Zn(2+) contacts are provided by C60, C62, C75, and C78. The interval G188–R209 is disordered. Positions 535, 537, and 539 each coordinate Mg(2+). Zn(2+)-binding residues include C882, C959, C966, and C969.

It belongs to the RNA polymerase beta' chain family. In terms of assembly, the RNAP catalytic core consists of 2 alpha, 1 beta, 1 beta' and 1 omega subunit. When a sigma factor is associated with the core the holoenzyme is formed, which can initiate transcription. Mg(2+) is required as a cofactor. Zn(2+) serves as cofactor.

It carries out the reaction RNA(n) + a ribonucleoside 5'-triphosphate = RNA(n+1) + diphosphate. Its function is as follows. DNA-dependent RNA polymerase catalyzes the transcription of DNA into RNA using the four ribonucleoside triphosphates as substrates. The sequence is that of DNA-directed RNA polymerase subunit beta' from Clavibacter sepedonicus (Clavibacter michiganensis subsp. sepedonicus).